The chain runs to 629 residues: MFYQDPFDVIIIGGGHAGTEAAMTAARMGQQTLLLTHNIDTLGQMSCNPAIGGIGKGHLVKEVDALGGLMAKAIDQAGIQFRILNASKGPAVRATRAQADRVLYRQAVRTALENQPNLMIFQQAVEDLIVENDRVVGAVTQMGLKFRAKAVVLTVGTFLDGKIHIGLDNYSGGRAGDPPSIPLSRRLRELPLRVSRLKTGTPPRIDARTIDFSVLAQQHGDNPMPVFSFMGNASQHPQQVPCYITHTNEKTHDVIRNNLDRSPMYAGVIEGIGPRYCPSIEDKVMRFADRNQHQIFLEPEGLTSNEIYPNGISTSLPFDVQMQIVRSMQGMENAKIVRPGYAIEYDFFDPRDLKPTLESKFIHGLFFAGQINGTTGYEEAAAQGLLAGLNAARLSADKEGWAPARSQAYLGVLVDDLCTLGTKEPYRMFTSRAEYRLMLREDNADLRLTEMGRELGLVDDERWARFNEKLENIERERQRLKSTWVTPSAESADEVNAHLTTPLSREASGEDLLRRPEMTYAQLTSLAAFAPALEDEQAAEQVEIQVKYEGYIARQQDEIEKQLRNENTLLPATLDYRQVSGLSNEVIAKLNDHKPASIGQASRISGVTPAAISILLVWLKKQGMLRRSA.

FAD is bound by residues 13–18 (GGGHAG), Val-125, and Ser-180. 273–287 (GPRYCPSIEDKVMRF) lines the NAD(+) pocket. Gln-370 contributes to the FAD binding site.

It belongs to the MnmG family. Homodimer. Heterotetramer of two MnmE and two MnmG subunits. FAD is required as a cofactor.

The protein localises to the cytoplasm. In terms of biological role, NAD-binding protein involved in the addition of a carboxymethylaminomethyl (cmnm) group at the wobble position (U34) of certain tRNAs, forming tRNA-cmnm(5)s(2)U34. The polypeptide is tRNA uridine 5-carboxymethylaminomethyl modification enzyme MnmG (Salmonella paratyphi C (strain RKS4594)).